Here is a 428-residue protein sequence, read N- to C-terminus: Elongation factor 1-alpha (428 aa).

The 211-residue stretch at 5 to 215 folds into the tr-type G domain; the sequence is KPHVNIVFIG…ALDQIPEPPK (211 aa). The segment at 14-21 is G1; the sequence is GHVDHGKS. Residue 14–21 coordinates GTP; sequence GHVDHGKS. S21 is a Mg(2+) binding site. The G2 stretch occupies residues 68–72; sequence GITID. Residues 89–92 are G3; it reads DAPG. GTP contacts are provided by residues 89–93 and 144–147; these read DAPGH and NKMD. Residues 144-147 form a G4 region; that stretch reads NKMD. Positions 181-183 are G5; the sequence is SAW.

Belongs to the TRAFAC class translation factor GTPase superfamily. Classic translation factor GTPase family. EF-Tu/EF-1A subfamily.

It localises to the cytoplasm. The catalysed reaction is GTP + H2O = GDP + phosphate + H(+). In terms of biological role, GTP hydrolase that promotes the GTP-dependent binding of aminoacyl-tRNA to the A-site of ribosomes during protein biosynthesis. This chain is Elongation factor 1-alpha, found in Thermococcus kodakarensis (strain ATCC BAA-918 / JCM 12380 / KOD1) (Pyrococcus kodakaraensis (strain KOD1)).